Reading from the N-terminus, the 442-residue chain is Phosphoglucosamine mutase (442 aa).

Catalysis depends on serine 98, which acts as the Phosphoserine intermediate. 4 residues coordinate Mg(2+): serine 98, aspartate 236, aspartate 238, and aspartate 240. A Phosphoserine modification is found at serine 98.

This sequence belongs to the phosphohexose mutase family. Mg(2+) serves as cofactor. Activated by phosphorylation.

It catalyses the reaction alpha-D-glucosamine 1-phosphate = D-glucosamine 6-phosphate. In terms of biological role, catalyzes the conversion of glucosamine-6-phosphate to glucosamine-1-phosphate. This is Phosphoglucosamine mutase from Natranaerobius thermophilus (strain ATCC BAA-1301 / DSM 18059 / JW/NM-WN-LF).